The primary structure comprises 123 residues: MIQPQTLLNVADNSGARKLMCIRVIGAAGNQRYARIGDVIIAVIKDAVPKMPLERSEVIRAVIVRTRKEFKGDDGIIIRYDDNAAVIIDQKGNPKGTRVFGAVAEELRELNFTKIVSLAPEVL.

This sequence belongs to the universal ribosomal protein uL14 family. Part of the 50S ribosomal subunit.

The protein localises to the plastid. It is found in the chloroplast. Its function is as follows. Binds to 23S rRNA. This is Large ribosomal subunit protein uL14c from Sorghum bicolor (Sorghum).